Here is a 149-residue protein sequence, read N- to C-terminus: Large ribosomal subunit protein bL9 (149 aa).

This sequence belongs to the bacterial ribosomal protein bL9 family.

In terms of biological role, binds to the 23S rRNA. The chain is Large ribosomal subunit protein bL9 from Vibrio cholerae serotype O1 (strain ATCC 39541 / Classical Ogawa 395 / O395).